We begin with the raw amino-acid sequence, 632 residues long: SH2B adapter protein 2 (632 aa).

Tyr52 carries the phosphotyrosine modification. Residue Ser141 is modified to Phosphoserine. The PH domain maps to 193–306; sequence DIQREGALRF…WVADIQGCVD (114 aa). Ser310 is subject to Phosphoserine. Positions 381–409 are disordered; it reads TLESPGGSGSDSNNTGEQGAETDPEAEPE. Positions 400-409 are enriched in acidic residues; it reads AETDPEAEPE. An SH2 domain is found at 417–515; sequence WFHGTLSRVK…SADITLRSYV (99 aa). Disordered regions lie at residues 516–537 and 558–632; these read RAQDPPPEPGPTPPAAPASPAC and ASPS…YSFY. Over residues 519 to 532 the composition is skewed to pro residues; that stretch reads DPPPEPGPTPPAAP. Composition is skewed to low complexity over residues 558 to 579 and 604 to 626; these read ASPSDAAGASSSSASSSSAASG and EAVAATAAEEPPEAAPGRARAVE. The residue at position 629 (Tyr629) is a Phosphotyrosine.

It belongs to the SH2B adapter family. In terms of assembly, homodimer. Interacts with KIT/c-KIT, SHC1, EPOR, PDGFR, VAV1 and VAV3. Interacts (via N-terminal region) with SHC1. Interacts (via the phosphorylated C-terminus) with GRB2. Interacts (via its SH2 domain) with EPOR, INSR and KIT. Interacts with GRB2 after B-cell antigen receptor stimulation. Interacts (via PH domain) with VAV3. Interacts with NTRK1, NTRK2 and NTRK3 (phosphorylated); after stimulation of the receptor by its extracellular ligand and subsequent autophosphorylation of the receptor. Binds INSR, GRB2, ASB6 and CAP. Insulin stimulation leads to dissociation of CAP. Binds CBS only when SH2B2/APS has become phosphorylated. INSR binding does not depend on the phosphorylation of SH2B2/APS. Tyrosine phosphorylated by JAK2, KIT and other kinases activated by B-cell receptor in response to stimulation with cytokines, IL3, IL5, PDGF, IGF1, IGF2, CSF2/GM-CSF and cross-linking of the B-cell receptor complex. In terms of tissue distribution, expressed in spleen, prostate, testis, uterus, small intestine and skeletal muscle. Among hematopoietic cell lines, expressed exclusively in B-cells. Not expressed in most tumor cell lines.

It is found in the cytoplasm. The protein localises to the cell membrane. Its function is as follows. Adapter protein for several members of the tyrosine kinase receptor family. Involved in multiple signaling pathways. May be involved in coupling from immunoreceptor to Ras signaling. Acts as a negative regulator of cytokine signaling in collaboration with CBL. Binds to EPOR and suppresses EPO-induced STAT5 activation, possibly through a masking effect on STAT5 docking sites in EPOR. Suppresses PDGF-induced mitogenesis. May induce cytoskeletal reorganization via interaction with VAV3. The polypeptide is SH2B adapter protein 2 (SH2B2) (Homo sapiens (Human)).